We begin with the raw amino-acid sequence, 708 residues long: F-box protein MAX2 homolog A (708 aa).

Positions Ala2 to Leu49 constitute an F-box domain.

In terms of assembly, part of a putative SCF (SKP1/Cullin/F-box) ubiquitin ligase complex. Interacts with DAD2. Interacts with KAI2IA in the presence of (-)-germacrene D. In terms of tissue distribution, mainly expressed in fully expanded leaves, lateral roots, axillary and shoot apex, and, to a lower extent, in internodes and nodes.

Its subcellular location is the nucleus. Functionally, component of SCF(ASK-cullin-F-box) E3 ubiquitin ligase complexes, which may mediate the ubiquitination and subsequent proteasomal degradation of target proteins. Is necessary for responses to strigolactones and may be involved in the ubiquitin-mediated degradation of specific proteins that activate axillary growth. Targets probably SMAX1A to degradation upon the formation of an E3 SCF ubiquitin ligase complex (ASK-cullin-F-box) containing MAX2A and KAI2IA in response to (-)-germacrene D in the stigma. The sequence is that of F-box protein MAX2 homolog A from Petunia hybrida (Petunia).